A 964-amino-acid polypeptide reads, in one-letter code: Pumilio homolog 3 (964 aa).

The tract at residues 1–22 (MMIPELGRRPMHRGNEDSSFGD) is disordered. Position 192 is a phosphoserine (serine 192). Disordered stretches follow at residues 204–235 (PVVQ…ASQG), 256–300 (GTPD…TSGL), and 343–388 (DGHN…VANP). 2 stretches are compositionally biased toward polar residues: residues 207–216 (QQPSRPASRN) and 223–234 (DSNNNLSPSASQ). At threonine 257 the chain carries Phosphothreonine. Composition is skewed to polar residues over residues 287–300 (TSNQ…TSGL) and 356–384 (RSDQ…SGSG). Positions 606–946 (FGSSMLEEFK…HIVARVEKLV (341 aa)) constitute a PUM-HD domain. Pumilio repeat units follow at residues 626 to 661 (EIAG…MVYE), 662 to 697 (EIMP…ELGE), 698 to 733 (KLID…QMVK), 734 to 769 (ELDG…FIIS), 770 to 806 (TFFG…KVME), 807 to 842 (EILS…VIIK), 843 to 878 (ELAG…LLVN), and 879 to 920 (EMLG…LILT).

The protein resides in the cytoplasm. Its function is as follows. Sequence-specific RNA-binding protein that regulates translation and mRNA stability by binding the 3'-UTR of target mRNAs. Binds the APUM-binding elements (APBEs) in the 3'-UTR mRNA sequence of CLV1, PNH, WUS and FAS2. This is Pumilio homolog 3 (APUM3) from Arabidopsis thaliana (Mouse-ear cress).